Here is a 198-residue protein sequence, read N- to C-terminus: DnaJ homolog subfamily C member 12 (198 aa).

M1 is subject to N-acetylmethionine. The J domain maps to 14–79; it reads DYYTLLGCDE…ASRARYDHWR (66 aa). A disordered region spans residues 112-167; the sequence is MLEESDQTPTDKIENEEQDEQKEIKKEEFGSTTEKMEQKESKSVEKSFSPQNPDSP. Residues 120-156 show a composition bias toward basic and acidic residues; it reads PTDKIENEEQDEQKEIKKEEFGSTTEKMEQKESKSVE. A phosphoserine mark is found at S160, S166, and S182.

As to quaternary structure, interacts with HSPA8. Interacts with TPH1. Interacts with TPH2.

The protein localises to the cytoplasm. Probable co-chaperone that participates in the proper folding of biopterin-dependent aromatic amino acid hydroxylases, which include phenylalanine-4-hydroxylase (PAH), tyrosine 3-monooxygenase (TH) and peripheral and neuronal tryptophan hydroxylases (TPH1 and TPH2). This chain is DnaJ homolog subfamily C member 12 (DNAJC12), found in Bos taurus (Bovine).